A 612-amino-acid chain; its full sequence is Phosphomethylpyrimidine synthase (612 aa).

2 disordered regions span residues 1–33 (MTIK…TEAG) and 105–146 (AGRP…RDGN). A compositionally biased stretch (low complexity) spans 12 to 24 (TQNTAQADTAENT). Positions 105–117 (AGRPVRPEDDGIK) are enriched in basic and acidic residues. Residues asparagine 213, methionine 242, tyrosine 271, histidine 307, 327-329 (SRG), 368-371 (DGLR), and glutamate 407 contribute to the substrate site. Histidine 411 is a binding site for Zn(2+). Tyrosine 434 is a substrate binding site. Histidine 475 is a binding site for Zn(2+). [4Fe-4S] cluster-binding residues include cysteine 555, cysteine 558, and cysteine 563.

The protein belongs to the ThiC family. The cofactor is [4Fe-4S] cluster.

The enzyme catalyses 5-amino-1-(5-phospho-beta-D-ribosyl)imidazole + S-adenosyl-L-methionine = 4-amino-2-methyl-5-(phosphooxymethyl)pyrimidine + CO + 5'-deoxyadenosine + formate + L-methionine + 3 H(+). It functions in the pathway cofactor biosynthesis; thiamine diphosphate biosynthesis. Functionally, catalyzes the synthesis of the hydroxymethylpyrimidine phosphate (HMP-P) moiety of thiamine from aminoimidazole ribotide (AIR) in a radical S-adenosyl-L-methionine (SAM)-dependent reaction. This is Phosphomethylpyrimidine synthase from Streptomyces coelicolor (strain ATCC BAA-471 / A3(2) / M145).